The following is a 95-amino-acid chain: Phosphoribosyl-ATP pyrophosphatase (95 aa).

It belongs to the PRA-PH family.

It localises to the cytoplasm. It catalyses the reaction 1-(5-phospho-beta-D-ribosyl)-ATP + H2O = 1-(5-phospho-beta-D-ribosyl)-5'-AMP + diphosphate + H(+). It functions in the pathway amino-acid biosynthesis; L-histidine biosynthesis; L-histidine from 5-phospho-alpha-D-ribose 1-diphosphate: step 2/9. This Sulfolobus acidocaldarius (strain ATCC 33909 / DSM 639 / JCM 8929 / NBRC 15157 / NCIMB 11770) protein is Phosphoribosyl-ATP pyrophosphatase.